We begin with the raw amino-acid sequence, 290 residues long: UPF0761 membrane protein YihY (290 aa).

6 helical membrane-spanning segments follow: residues 44 to 64 (LLSL…FPMF), 104 to 124 (VGAC…DSAL), 140 to 160 (FAVY…SLAI), 183 to 203 (IFPL…VPTI), 210 to 230 (AIVG…GFAL), and 244 to 264 (VLAV…IVLL).

The protein belongs to the UPF0761 family.

The protein localises to the cell inner membrane. The sequence is that of UPF0761 membrane protein YihY from Escherichia coli O1:K1 / APEC.